The chain runs to 308 residues: D-alanine--D-alanine ligase (308 aa).

In terms of domain architecture, ATP-grasp spans 104-301 (KQIWQGSDLP…FDELCVAILD (198 aa)). ATP is bound at residue 130 to 185 (IAELGLPVIIKPVHEGSSVGMSKVEKAEDFAAAIEKATQHDAVVMAEKWITGREFT). Mg(2+)-binding residues include Asp-255, Glu-268, and Asn-270.

The protein belongs to the D-alanine--D-alanine ligase family. Mg(2+) is required as a cofactor. It depends on Mn(2+) as a cofactor.

It is found in the cytoplasm. It carries out the reaction 2 D-alanine + ATP = D-alanyl-D-alanine + ADP + phosphate + H(+). It functions in the pathway cell wall biogenesis; peptidoglycan biosynthesis. In terms of biological role, cell wall formation. The sequence is that of D-alanine--D-alanine ligase from Acinetobacter baumannii (strain AB307-0294).